Here is a 124-residue protein sequence, read N- to C-terminus: Small ribosomal subunit protein uS13 (124 aa).

Positions 87 to 124 (GSYRGNRHRKRLPVRGQRTKTNSRTRKGKRRTVGSKTK) are disordered. Positions 91–124 (GNRHRKRLPVRGQRTKTNSRTRKGKRRTVGSKTK) are enriched in basic residues.

Belongs to the universal ribosomal protein uS13 family. Part of the 30S ribosomal subunit. Forms a loose heterodimer with protein S19. Forms two bridges to the 50S subunit in the 70S ribosome.

Located at the top of the head of the 30S subunit, it contacts several helices of the 16S rRNA. In the 70S ribosome it contacts the 23S rRNA (bridge B1a) and protein L5 of the 50S subunit (bridge B1b), connecting the 2 subunits; these bridges are implicated in subunit movement. Contacts the tRNAs in the A and P-sites. This Elusimicrobium minutum (strain Pei191) protein is Small ribosomal subunit protein uS13.